Here is a 113-residue protein sequence, read N- to C-terminus: U11-theraphotoxin-Hhn1a (113 aa).

The signal sequence occupies residues 1-21; that stretch reads MNTVRVTFLLVFVLAVSLGQA. Positions 22–74 are excised as a propeptide; that stretch reads DKDENRMEMQEKTEQGNSYLDFAENLLLQKLEELEAKLLEEDSEESRNSRQKR. The span at 60 to 69 shows a compositional bias: basic and acidic residues; sequence LEEDSEESRN. The interval 60-83 is disordered; it reads LEEDSEESRNSRQKRCIGEGVPCD. 3 disulfides stabilise this stretch: cysteine 75/cysteine 90, cysteine 82/cysteine 95, and cysteine 89/cysteine 110.

Belongs to the neurotoxin 14 (magi-1) family. 01 (HNTX-16) subfamily. In terms of tissue distribution, expressed by the venom gland.

The protein resides in the secreted. In terms of biological role, probable ion channel inhibitor. The sequence is that of U11-theraphotoxin-Hhn1a from Cyriopagopus hainanus (Chinese bird spider).